Reading from the N-terminus, the 627-residue chain is Membrane protein insertase YidC (627 aa).

Residues L8–P28 traverse the membrane as a helical segment. Residues K33–G57 show a composition bias toward polar residues. Residues K33–V68 are disordered. Over residues K58–V68 the composition is skewed to basic and acidic residues. 4 helical membrane passes run F417 to F437, V488 to F508, A536 to G556, and M575 to V595.

The protein belongs to the OXA1/ALB3/YidC family. Type 1 subfamily. As to quaternary structure, interacts with the Sec translocase complex via SecD. Specifically interacts with transmembrane segments of nascent integral membrane proteins during membrane integration.

The protein resides in the cell inner membrane. Its function is as follows. Required for the insertion and/or proper folding and/or complex formation of integral membrane proteins into the membrane. Involved in integration of membrane proteins that insert both dependently and independently of the Sec translocase complex, as well as at least some lipoproteins. Aids folding of multispanning membrane proteins. This chain is Membrane protein insertase YidC, found in Leptospira interrogans serogroup Icterohaemorrhagiae serovar copenhageni (strain Fiocruz L1-130).